We begin with the raw amino-acid sequence, 145 residues long: 3-hydroxyacyl-[acyl-carrier-protein] dehydratase FabZ (145 aa).

H48 is a catalytic residue.

Belongs to the thioester dehydratase family. FabZ subfamily.

Its subcellular location is the cytoplasm. It catalyses the reaction a (3R)-hydroxyacyl-[ACP] = a (2E)-enoyl-[ACP] + H2O. In terms of biological role, involved in unsaturated fatty acids biosynthesis. Catalyzes the dehydration of short chain beta-hydroxyacyl-ACPs and long chain saturated and unsaturated beta-hydroxyacyl-ACPs. This chain is 3-hydroxyacyl-[acyl-carrier-protein] dehydratase FabZ, found in Campylobacter hominis (strain ATCC BAA-381 / DSM 21671 / CCUG 45161 / LMG 19568 / NCTC 13146 / CH001A).